The following is a 199-amino-acid chain: Adenosylcobinamide-GDP ribazoletransferase (199 aa).

The next 2 membrane-spanning stretches (helical) occupy residues 2-22 (LAGG…VFAV) and 61-81 (IAAV…VAAL).

This sequence belongs to the CobS family. Mg(2+) serves as cofactor.

Its subcellular location is the cell membrane. The catalysed reaction is alpha-ribazole + adenosylcob(III)inamide-GDP = adenosylcob(III)alamin + GMP + H(+). It carries out the reaction alpha-ribazole 5'-phosphate + adenosylcob(III)inamide-GDP = adenosylcob(III)alamin 5'-phosphate + GMP + H(+). The protein operates within cofactor biosynthesis; adenosylcobalamin biosynthesis; adenosylcobalamin from cob(II)yrinate a,c-diamide: step 7/7. Its function is as follows. Joins adenosylcobinamide-GDP and alpha-ribazole to generate adenosylcobalamin (Ado-cobalamin). Also synthesizes adenosylcobalamin 5'-phosphate from adenosylcobinamide-GDP and alpha-ribazole 5'-phosphate. In Halobacterium salinarum (strain ATCC 700922 / JCM 11081 / NRC-1) (Halobacterium halobium), this protein is Adenosylcobinamide-GDP ribazoletransferase.